The sequence spans 343 residues: MGDVVMNERELILAIETSCDETSAAVIENGTTILSNVVSSQIDSHKRFGGVVPEIASRHHVEQITVIVEEAMHEAGVDFADLAAVAVTEGPGLVGALLIGVNAAKAIAFAHQLPLIGVHHIAGHIYANRLLKELEFPLLALVVSGGHTELIYMENHGEFEVIGETRDDAVGEAYDKVARTLGLPYPGGPHIDRLAVNGEDTLQFPRAWLEPDSFDFSFSGLKSAVINTLHNAKQRGENVQAEDVAASFQASVIDVLVTKTKKAAEEYKVRQVLLAGGVAANKGLRTALEEAFFKEPIDLVIPPLSLCTDNAAMIGAAASIKFKQQTFAGMDLNGQPSLELEND.

Histidine 120 and histidine 124 together coordinate Fe cation. Substrate-binding positions include valine 142–glycine 146, aspartate 175, glycine 188, aspartate 192, and asparagine 281. Aspartate 309 provides a ligand contact to Fe cation.

This sequence belongs to the KAE1 / TsaD family. The cofactor is Fe(2+).

The protein resides in the cytoplasm. The catalysed reaction is L-threonylcarbamoyladenylate + adenosine(37) in tRNA = N(6)-L-threonylcarbamoyladenosine(37) in tRNA + AMP + H(+). Functionally, required for the formation of a threonylcarbamoyl group on adenosine at position 37 (t(6)A37) in tRNAs that read codons beginning with adenine. Is involved in the transfer of the threonylcarbamoyl moiety of threonylcarbamoyl-AMP (TC-AMP) to the N6 group of A37, together with TsaE and TsaB. TsaD likely plays a direct catalytic role in this reaction. The sequence is that of tRNA N6-adenosine threonylcarbamoyltransferase from Halalkalibacterium halodurans (strain ATCC BAA-125 / DSM 18197 / FERM 7344 / JCM 9153 / C-125) (Bacillus halodurans).